The following is a 481-amino-acid chain: Hyaluronidase-4 (481 aa).

The Cytoplasmic portion of the chain corresponds to 1-11 (MQLLPEGQLRL). A helical membrane pass occupies residues 12-32 (CVFQPVHLTSGLLILFILKSI). Residues 33–455 (SSLKPARLPV…CREMTEASGP (423 aa)) lie on the Extracellular side of the membrane. 5 disulfides stabilise this stretch: Cys59-Cys351, Cys223-Cys237, Cys376-Cys387, Cys381-Cys435, and Cys437-Cys446. Residues Asn64 and Asn115 are each glycosylated (N-linked (GlcNAc...) asparagine). The active-site Proton donor is Glu147. Residues Asn232 and Asn343 are each glycosylated (N-linked (GlcNAc...) asparagine). The helical transmembrane segment at 456-476 (SGLSLSSSSVITLCLLVLAGY) threads the bilayer. Residues 477-481 (QSIQL) are Cytoplasmic-facing.

Belongs to the glycosyl hydrolase 56 family.

Its subcellular location is the membrane. The catalysed reaction is Random hydrolysis of (1-&gt;4)-linkages between N-acetyl-beta-D-glucosamine and D-glucuronate residues in hyaluronate.. Its function is as follows. Endo-hyaluronidase that degrades hyaluronan to smaller oligosaccharide fragments. Also has chondroitin sulfate hydrolase activity, The best substrate being the galactosaminidic linkage in the sequence of a trisulfated tetrasaccharide. The protein is Hyaluronidase-4 (Hyal4) of Mus musculus (Mouse).